Reading from the N-terminus, the 396-residue chain is Tryptophan synthase beta chain (396 aa).

Lysine 86 carries the post-translational modification N6-(pyridoxal phosphate)lysine.

Belongs to the TrpB family. In terms of assembly, tetramer of two alpha and two beta chains. Pyridoxal 5'-phosphate serves as cofactor.

It catalyses the reaction (1S,2R)-1-C-(indol-3-yl)glycerol 3-phosphate + L-serine = D-glyceraldehyde 3-phosphate + L-tryptophan + H2O. Its pathway is amino-acid biosynthesis; L-tryptophan biosynthesis; L-tryptophan from chorismate: step 5/5. In terms of biological role, the beta subunit is responsible for the synthesis of L-tryptophan from indole and L-serine. The sequence is that of Tryptophan synthase beta chain from Aliivibrio fischeri (strain MJ11) (Vibrio fischeri).